The following is a 634-amino-acid chain: (-)-limonene synthase, chloroplastic (634 aa).

The transit peptide at 1-21 directs the protein to the chloroplast; that stretch reads MSPVSAIPLAYKLCLPRSLIS. (2E)-geranyl diphosphate-binding residues include Arg348, Asp385, Asp389, Arg526, and Gly529. 2 residues coordinate Mg(2+): Asp385 and Asp389. Residues 385-389 carry the DDXXD motif motif; that stretch reads DDIYD. Positions 529 and 537 each coordinate Mg(2+).

This sequence belongs to the terpene synthase family. Tpsb subfamily. In terms of assembly, monomer. Mg(2+) serves as cofactor. Requires Mn(2+) as cofactor.

Its subcellular location is the plastid. It is found in the chloroplast. It catalyses the reaction (2E)-geranyl diphosphate = (4S)-limonene + diphosphate. It participates in secondary metabolite biosynthesis; terpenoid biosynthesis. It functions in the pathway terpene metabolism; oleoresin biosynthesis. Its function is as follows. Monoterpene synthase (mono-TPS) involved in the biosynthesis of monoterpene natural products. Catalyzes the conversion of (2E)-geranyl diphosphate (GPP) into (-)-limonene. Not able to use geranylgeranyl pyrophosphate (GGPP) and farnesyl pyrophosphate (FPP) as substrates. In Picea sitchensis (Sitka spruce), this protein is (-)-limonene synthase, chloroplastic.